Here is a 153-residue protein sequence, read N- to C-terminus: 3-hydroxyacyl-[acyl-carrier-protein] dehydratase FabZ (153 aa).

His59 is a catalytic residue.

Belongs to the thioester dehydratase family. FabZ subfamily.

It is found in the cytoplasm. It catalyses the reaction a (3R)-hydroxyacyl-[ACP] = a (2E)-enoyl-[ACP] + H2O. Its function is as follows. Involved in unsaturated fatty acids biosynthesis. Catalyzes the dehydration of short chain beta-hydroxyacyl-ACPs and long chain saturated and unsaturated beta-hydroxyacyl-ACPs. This chain is 3-hydroxyacyl-[acyl-carrier-protein] dehydratase FabZ, found in Thermosynechococcus vestitus (strain NIES-2133 / IAM M-273 / BP-1).